The sequence spans 2121 residues: Non-reducing polyketide synthase aoiG (2121 aa).

In terms of domain architecture, Starter acyltransferase (SAT) spans 5-258; sequence YIFGDQTVRV…LPVSIYAPYH (254 aa). The Ketosynthase family 3 (KS3) domain maps to 386-817; it reads SSKIAIIGFS…GGNTAVLVED (432 aa). Catalysis depends on for beta-ketoacyl synthase activity residues cysteine 558, histidine 693, and histidine 735. The region spanning 921–1239 is the Malonyl-CoA:ACP transacylase (MAT) domain; that stretch reads FLFTGQGAQQ…LSVLHLAGVR (319 aa). The interval 1302–1433 is N-terminal hotdog fold; that stretch reads QKILEEEMTA…CTIELQRPHQ (132 aa). Residues 1302 to 1608 form the PKS/mFAS DH domain; the sequence is QKILEEEMTA…FQKVARRVLE (307 aa). Histidine 1334 functions as the Proton acceptor; for dehydratase activity in the catalytic mechanism. The segment at 1461–1608 is C-terminal hotdog fold; that stretch reads THKMRRGVAY…FQKVARRVLE (148 aa). Aspartate 1519 (proton donor; for dehydratase activity) is an active-site residue. One can recognise a Carrier 1 domain in the interval 1646–1723; that stretch reads PHVEDAWQQV…SLRIYLNMSS (78 aa). O-(pantetheine 4'-phosphoryl)serine is present on serine 1683. Residues 1728 to 1752 are compositionally biased toward low complexity; the sequence is DSIETSSYPTPDESTTTTITSPSGS. The disordered stretch occupies residues 1728-1760; sequence DSIETSSYPTPDESTTTTITSPSGSDRNVGRNS. The 78-residue stretch at 1763–1840 folds into the Carrier 2 domain; sequence DGVGTTVGLV…AITAALHAIF (78 aa). Serine 1800 carries the O-(pantetheine 4'-phosphoryl)serine modification. Residues 1872–1976 are TE/CLC (thioesterase/Claisen cyclase) domain; it reads TLFLFPDGSG…ILIDSPNPMG (105 aa).

Requires pantetheine 4'-phosphate as cofactor.

Non-reducing polyketide synthase; part of the gene cluster that mediates the biosynthesis of a methylated derivative of known natural products orthosporin and diaporthin. AoiG catalyzes the biosynthesis of the hexaketide isocoumarin scaffold, via condensation of one acetyl-CoA starter unit with 6 malonyl-CoA units. An oxidoreductase that has still to be identified catalyzes the stereospecific reduction of the carbonyl moiety of the hexaketide isocoumarin scaffold to generate the S-configured secondary alcohol at C-11 of orthosporin. The methyltrasferase aoiF then catalyzes the biotransformation of not only orthosporin to diaporthin but also diaporthin to the final product, by performing a tandem methylation of the polyketide core. The chain is Non-reducing polyketide synthase aoiG from Aspergillus oryzae (strain ATCC 42149 / RIB 40) (Yellow koji mold).